We begin with the raw amino-acid sequence, 221 residues long: Imidazoleglycerol-phosphate dehydratase (221 aa).

This sequence belongs to the imidazoleglycerol-phosphate dehydratase family.

It carries out the reaction D-erythro-1-(imidazol-4-yl)glycerol 3-phosphate = 3-(imidazol-4-yl)-2-oxopropyl phosphate + H2O. Its pathway is amino-acid biosynthesis; L-histidine biosynthesis; L-histidine from 5-phospho-alpha-D-ribose 1-diphosphate: step 6/9. The protein is Imidazoleglycerol-phosphate dehydratase (HIS3) of Kluyveromyces lactis (strain ATCC 8585 / CBS 2359 / DSM 70799 / NBRC 1267 / NRRL Y-1140 / WM37) (Yeast).